Consider the following 474-residue polypeptide: 4-O-methyl-glucuronoyl methylesterase (474 aa).

The signal sequence occupies residues methionine 1–alanine 17. Positions alanine 19–leucine 55 constitute a CBM1 domain. The tract at residues alanine 61 to serine 91 is disordered. Residues alanine 68 to threonine 84 show a composition bias toward pro residues. An N-linked (GlcNAc...) asparagine glycan is attached at asparagine 120. The short motif at glycine 284–glycine 289 is the GXSYXG catalytic site motif element. 2 disulfide bridges follow: cysteine 285/cysteine 421 and cysteine 317/cysteine 393. Serine 286 serves as the catalytic Nucleophile. Lysine 290, glutamine 332, glutamate 340, and tryptophan 384 together coordinate substrate. Residue histidine 420 is the Proton donor/acceptor of the active site.

This sequence belongs to the carbohydrate esterase 15 (CE15) family. In terms of processing, N-glycosylated.

The protein localises to the secreted. It carries out the reaction a 4-O-methyl-alpha-D-glucuronosyl ester derivative + H2O = 4-O-methyl-alpha-D-glucuronate derivative + an alcohol + H(+). Glucuronoyl esterase which may play a significant role in biomass degradation, as it is considered to disconnect hemicellulose from lignin through the hydrolysis of the ester bond between 4-O-methyl-D-glucuronic acid residues of glucuronoxylans and aromatic alcohols of lignin. This chain is 4-O-methyl-glucuronoyl methylesterase, found in Cerrena unicolor (Canker rot fungus).